We begin with the raw amino-acid sequence, 328 residues long: UDP-glucose 4-epimerase (328 aa).

Residues 20-21 (FV), 41-46 (VRHAVN), 57-58 (DI), 77-81 (CAARA), S123, Y149, and K153 contribute to the NAD(+) site. Residues S123 and Y149 each coordinate substrate. Y149 serves as the catalytic Proton acceptor. Substrate is bound by residues 198–199 (GI) and 215–217 (SIN).

Belongs to the NAD(P)-dependent epimerase/dehydratase family. Homodimer. NAD(+) is required as a cofactor.

The catalysed reaction is UDP-alpha-D-glucose = UDP-alpha-D-galactose. Its pathway is bacterial outer membrane biogenesis; LPS O-antigen biosynthesis. Functionally, involved in the metabolism of galactose. Catalyzes the conversion of UDP-galactose (UDP-Gal) to UDP-glucose (UDP-Glc) through a mechanism involving the transient reduction of NAD. This Vibrio cholerae protein is UDP-glucose 4-epimerase (galE).